The following is a 123-amino-acid chain: Sterol carrier protein 2 (123 aa).

The region spanning 16-113 (KEHLSTDAGK…GSLSAAQKFT (98 aa)) is the SCP2 domain. Residues 121–123 (SKL) carry the Microbody targeting signal motif.

In terms of tissue distribution, expressed in most tissues including seedlings, cotyledons, inflorescence, leaves, stems, roots, siliques and flower buds, with the highest levels in floral tissues and in maturing seeds.

It localises to the peroxisome. Enhances the transfer of lipids between membranes in vitro. Active on phosphatidylcholine (PC), 1-palmitoyl 2-oleoyl phosphatidylcholine (POPC) and ergosterol, and, to a lower extent, dimyristoyl phosphatidic acid, stigmasterol, desmosterol, beta-sitosterol and steryl glucoside. Inactive or poorly active on palmitic acid, stearoyl-coenzyme A, cholesterol, glucosylceramide and ceramide. Required during seeds and seedlings development. The protein is Sterol carrier protein 2 of Arabidopsis thaliana (Mouse-ear cress).